Consider the following 2082-residue polypeptide: MRRAMRDGGKPDRIGAAAPLRRAPLTATSGIDMNVQESIFPITPNGFAGHSMDDLMQRWLLAQLQATGILADGRAHAFDALAGRVQPLYRRWLEESLRLLRDAGLVRDDAQGWRAAERAPIDARDAQRHWDASRDAWLADRERAVYVVLIEAVLAQLPAILTGRRRATDVLFPNGSMARVQGVYTGNHVSDHFNRVLVDHAVRYVAGCAARRADAKLRFIEVGAGTGGTTEGLLAALAPHARHVGEYCFTDISKAFLNHAQRRFGEGAPFFGARVLDIEQPIDAQGFEPGAYDALVATNVLHATRDIRTTLRHCKALLKHNGLLFINEMTGSVPYLHLTFGMLEGWWRFTDDALRVAGCPAVAPQTWDRVLREEGFSSVIFPARDAHGQGQQIVIAQNDARRAGSARRDARASNGDAQHGARHEAAHDAQQDASGDTQADAHDSAHDSAHDSAHDSAHDSAHDSAHAAAALRREGRAYLRARAAELLGMPAGAIDPDEGLHAYGLDSILASQFAAQLAEAFDGFDGALLFEHKTINALLDHLLAAHADALARLLPPAGGAPARGVGARAQAAQASGEGRAAPPAAPHADARSDTPSSAPSSAPARPDQPAPSGPPAQPAQPAPRADTPPPAASAGHRGEARASDTRYAPRAPHPDAAAEPVAIIGISGRYPGAYDVPAFWRNLLAGACAITEVPAERWDWRAHYRADAAEAAREGKSYSKWGGFVDDVGRFDPAFFGMTPQDAQHTDPQELLFLEMCWHALQDAGQTPALLPGDVRRRAGVFAAITKHYAFPPTSFASLANRVSHALDFGGKSLAIDTMCSSSLVAVNEAWEYLQRDGRLAVVGGVNLYLDPQQYAHLSRFRFASSGPVCKAFGEGGDGFVPGEGAGAIVLKRLSDAERDGDPIHAVIRGCAVNHNGRSTSFTASDPARQADVVRDALTRAGVDPRTIGYVEAAANGHAMGDAIEMTGLGKVFAACDGVSGTRAIGSVKANIGHCEAASGMSQLTKVVMAMRDGVLAPTLRDGTRNPNIAFERLPFEVQEQAAPWRRLIVDGSEVPRRAGVTSIGGGGVNAHVVLEEYVAPPRAARPGAGTDDEVLFVLSARTREQLGAYAERWAGYLEAHPDCDVDAIAHTVRTAREPMAHRLAVLAHGRGELAALLRGWAAGGAASGAASGAASDQVFYGDVKQHRVVLSDALVQAARREGAASLAKLWVLGNALGAAHGADEPAPRRVGLLPPYPFERRLVWTSAHAPGTRHASAGEATEAAEAAEAAEAGAAAVAESAEAGAPAAAGDARLQPAPASNAEAFYSLSTLNASKDFQEQYLTLCPFPERIPGFSMTRMFIEPQKYPNEFALMQARQIEMRQVLFGREHFERISRVLDIGCGMGTDVIQLAKRFAHLRTTGYTITRAQAELGAGRIAREGLQGRAEIRHGDSAKDPFPGKYDLVIGIEVICHIQDKHGVFGNIARSLDDDGHVLLMDFVANGRGRISSPEIDIDIGTRQDWIDVAAAHGLVVDEVIDVSPQIANFLHDPEHERNIAALPGVAQASFRNFANTCVSLEKGWVSYCLLRLSKASRLSEAERRRLNAERFGASVAYPDALKAMHARGPAPYPRSPDAQPPAARAQAGVDGGVEASAPAGVKADSKAGPKSEVKSDAAARASRADIAASVAASVAASVEDAFEASLGLRRADLERADDLRALGIGSIQAVMLAEAINERLDLALPSRFVLEHATFGALVRAVAEAVAGGRGSSRDAPARELAYLSLLEPGGAMTAELLELPGGARAEILRGGRGPRVVLIPGLGMAGTVFRDLCRALTRRHEVIVYHYPGLGRSDPVAPIDVDAAAAHLYRTLDACGGDGAAALLGWSFGGVIAQRAALMRPRAWRALVLVNTLGAYRPLAPQFLTPGASRDGEPRGLGGLYQTDLDFVFAGDAPPAALARKDACAALMRDSLALDAAQAIDYLDALVRFDATAQLPSLRMPTLVVAGTADHFGDPAHAEQLVSLIPNARLARIAGAGHAVFLTHGEAFEPAVLAFLDETLRAAEAGGAAESVESVEATEAAEAARSPAVARRRATDDAPVGSDA.

The tract at residues 398–468 (NDARRAGSAR…DSAHDSAHAA (71 aa)) is disordered. Basic and acidic residues-rich tracts occupy residues 399–411 (DARR…RDAR), 419–430 (HGARHEAAHDAQ), and 439–468 (ADAH…AHAA). A Carrier 1 domain is found at 470–546 (ALRREGRAYL…ALLDHLLAAH (77 aa)). Ser-507 is modified (O-(pantetheine 4'-phosphoryl)serine). 2 stretches are compositionally biased toward low complexity: residues 560 to 582 (APAR…RAAP) and 593 to 605 (DTPS…APAR). The segment at 560–655 (APARGVGARA…RYAPRAPHPD (96 aa)) is disordered. Residues 606-631 (PDQPAPSGPPAQPAQPAPRADTPPPA) show a composition bias toward pro residues. Residues 658 to 1077 (AEPVAIIGIS…GVNAHVVLEE (420 aa)) enclose the Ketosynthase family 3 (KS3) domain. Disordered stretches follow at residues 1250 to 1269 (APGT…EAAE) and 1603 to 1653 (ARGP…VKSD). Composition is skewed to low complexity over residues 1256-1269 (ASAG…EAAE) and 1612-1624 (SPDA…RAQA). Residues 1640–1653 (ADSKAGPKSEVKSD) are compositionally biased toward basic and acidic residues. The 75-residue stretch at 1669 to 1743 (ASVAASVEDA…ALVRAVAEAV (75 aa)) folds into the Carrier 2 domain. Ser-1703 carries the O-(pantetheine 4'-phosphoryl)serine modification. Residues 1792–2022 (PRVVLIPGLG…GAGHAVFLTH (231 aa)) form the AB hydrolase-1 domain. Residues 2045 to 2067 (GAAESVESVEATEAAEAARSPAV) show a composition bias toward low complexity. Residues 2045 to 2082 (GAAESVESVEATEAAEAARSPAVARRRATDDAPVGSDA) form a disordered region.

Pantetheine 4'-phosphate is required as a cofactor.

Its subcellular location is the cytoplasm. It functions in the pathway antibiotic biosynthesis. Functionally, involved in production of the polyketide antibiotic thailandamide. This is Polyketide synthase ThaQ from Burkholderia thailandensis (strain ATCC 700388 / DSM 13276 / CCUG 48851 / CIP 106301 / E264).